Reading from the N-terminus, the 186-residue chain is ADP-ribosylation factor-like protein alp41 (186 aa).

Residue G2 is the site of N-myristoyl glycine attachment. GTP contacts are provided by residues 23–30 (GLDNAGKT), 66–70 (DIGGQ), and 125–128 (NKSD).

Belongs to the small GTPase superfamily. Arf family.

The protein resides in the cytoplasm. Its subcellular location is the cytoskeleton. Functionally, has a role in the cofactor-dependent pathway of microtubule biogenesis. Required for growth polarity control. The chain is ADP-ribosylation factor-like protein alp41 (alp41) from Schizosaccharomyces pombe (strain 972 / ATCC 24843) (Fission yeast).